We begin with the raw amino-acid sequence, 334 residues long: HTH-type transcriptional repressor PurR (334 aa).

One can recognise an HTH lacI-type domain in the interval 2 to 56; it reads ATIKDVARLAGVSTTTVSHVINKTRFVAEATQEKVMKAVDELNYAPSAVARSLKC. Residues 4–23 constitute a DNA-binding region (H-T-H motif); sequence IKDVARLAGVSTTTVSHVIN. Residues 48–56 mediate DNA binding; it reads SAVARSLKC. Hypoxanthine is bound by residues Phe73, Lys189, Phe220, and Asp274.

As to quaternary structure, homodimer.

Its pathway is purine metabolism; purine nucleotide biosynthesis [regulation]. In terms of biological role, is the main repressor of the genes involved in the de novo synthesis of purine nucleotides, regulating purB, purC, purEK, purF, purHD, purL, purMN and guaBA expression. PurR is allosterically activated to bind its cognate DNA by binding the purine corepressors, hypoxanthine or guanine, thereby effecting transcription repression. This is HTH-type transcriptional repressor PurR from Vibrio vulnificus (strain CMCP6).